Consider the following 497-residue polypeptide: Validamine 7-phosphate valienyltransferase (497 aa).

GDP-valienol is bound at residue Asp-158. His-182 is a validamine 7-phosphate binding site. GDP-valienol contacts are provided by residues Arg-290, Lys-295, Arg-321, 325 to 326 (NR), 361 to 362 (ND), and Thr-366. 383-386 (DGQN) lines the validamine 7-phosphate pocket. GDP-valienol-binding positions include 387–388 (LS) and Glu-391.

This sequence belongs to the glycosyltransferase 20 family. As to quaternary structure, homodimer.

The catalysed reaction is validamine 7-phosphate + GDP-valienol = validoxylamine A 7'-phosphate + GDP + H(+). In terms of biological role, involved in the biosynthesis of the antifungal agent validamycin A. Catalyzes the condensation between GDP-valienol and validamine 7-phosphate via a nonglycosidic C-N bond formation to yield validoxylamine A 7'-phosphate. The sequence is that of Validamine 7-phosphate valienyltransferase from Streptomyces hygroscopicus subsp. limoneus.